We begin with the raw amino-acid sequence, 490 residues long: Lignostilbene-alpha,beta-dioxygenase isozyme III (490 aa).

His167, His218, His285, and His477 together coordinate Fe cation.

This sequence belongs to the carotenoid oxygenase family. As to quaternary structure, homodimer of two beta subunits. The cofactor is Fe(2+).

The catalysed reaction is 1,2-bis(4-hydroxy-3-methoxyphenyl)ethylene + O2 = 2 vanillin. Activity is high with beta-5 type stilbene and minimal with beta-1 type stilbene. A 4-hydroxyl group and trans-stilbene structure is essential for the binding of substrates to the enzyme. Catalyzes the cleavage of the interphenyl double bond (C alpha-C beta) of lignin-derived polyphenolic diaryl-propane type compounds (Stilbene). This Sphingomonas paucimobilis (Pseudomonas paucimobilis) protein is Lignostilbene-alpha,beta-dioxygenase isozyme III.